The primary structure comprises 267 residues: MDNRPIGLLDSGVGGFTVVKKVIEKLPHESTVFIGDSANMPYGDKSREQIIELTRRSVKFLLQKKVKLIIFACNTATAVAMPTLQNEVEQQIIGVIQSGSLAAARTTKNKKVAVAATPVTINSHAYQKEIKFRDPDIKVMEVAAPELAPLIESQKDYDTNLAAVKRSIAPLKDQDFDTFVLGCTHYPLIQNEFVEALGDKIQIVDPADQVAQYTFNVMRRDGLFSSFDQAGKHEYYTTGDPDKFSEMGRRFLGQADLTSHQVDTRNL.

Residues 10–11 and 42–43 each bind substrate; these read DS and YG. Catalysis depends on cysteine 73, which acts as the Proton donor/acceptor. 74-75 serves as a coordination point for substrate; it reads NT. Cysteine 183 (proton donor/acceptor) is an active-site residue. 184–185 serves as a coordination point for substrate; sequence TH.

This sequence belongs to the aspartate/glutamate racemases family.

The catalysed reaction is L-glutamate = D-glutamate. It functions in the pathway cell wall biogenesis; peptidoglycan biosynthesis. Provides the (R)-glutamate required for cell wall biosynthesis. This is Glutamate racemase from Lactobacillus helveticus (strain DPC 4571).